The following is a 394-amino-acid chain: Elongation factor Tu 2 (394 aa).

A tr-type G domain is found at 10–204 (KPHVNVGTIG…ALDSYIPEPE (195 aa)). Residues 19–26 (GHVDHGKT) form a G1 region. 19 to 26 (GHVDHGKT) provides a ligand contact to GTP. Thr26 contacts Mg(2+). The G2 stretch occupies residues 60–64 (GITIS). The interval 81–84 (DCPG) is G3. GTP-binding positions include 81-85 (DCPGH) and 136-139 (NKCD). The tract at residues 136–139 (NKCD) is G4. Positions 174-176 (SAL) are G5.

The protein belongs to the TRAFAC class translation factor GTPase superfamily. Classic translation factor GTPase family. EF-Tu/EF-1A subfamily. Monomer.

The protein localises to the cytoplasm. The enzyme catalyses GTP + H2O = GDP + phosphate + H(+). In terms of biological role, GTP hydrolase that promotes the GTP-dependent binding of aminoacyl-tRNA to the A-site of ribosomes during protein biosynthesis. The protein is Elongation factor Tu 2 of Photorhabdus laumondii subsp. laumondii (strain DSM 15139 / CIP 105565 / TT01) (Photorhabdus luminescens subsp. laumondii).